The primary structure comprises 34 residues: MESVAYILIFTLTIGTLFFAVAFREPPRIERKEK.

The helical transmembrane segment at 3–23 (SVAYILIFTLTIGTLFFAVAF) threads the bilayer.

It belongs to the PsbT family. In terms of assembly, PSII is composed of 1 copy each of membrane proteins PsbA, PsbB, PsbC, PsbD, PsbE, PsbF, PsbH, PsbI, PsbJ, PsbK, PsbL, PsbM, PsbT, PsbX, PsbY, PsbZ, Psb30/Ycf12, peripheral proteins PsbO, CyanoQ (PsbQ), PsbU, PsbV and a large number of cofactors. It forms dimeric complexes.

Its subcellular location is the cellular thylakoid membrane. Its function is as follows. Found at the monomer-monomer interface of the photosystem II (PS II) dimer, plays a role in assembly and dimerization of PSII. PSII is a light-driven water plastoquinone oxidoreductase, using light energy to abstract electrons from H(2)O, generating a proton gradient subsequently used for ATP formation. The protein is Photosystem II reaction center protein T of Mastigocladus laminosus (Fischerella sp.).